A 260-amino-acid polypeptide reads, in one-letter code: Vaa serine proteinase homolog 1 (260 aa).

The signal sequence occupies residues 1–18 (MVLIRVLANLLVLQLSYA). The propeptide occupies 19 to 24 (QKSSEL). Positions 25–251 (VIGGDECNIN…YTDWIQSIIA (227 aa)) constitute a Peptidase S1 domain. 6 disulfides stabilise this stretch: Cys31-Cys165, Cys52-Cys68, Cys100-Cys258, Cys144-Cys212, Cys176-Cys191, and Cys202-Cys227. Asn123 is a glycosylation site (N-linked (GlcNAc...) asparagine). Residues 172 to 186 (DYSVCQKVYRKLPEK) form a key residues for binding to FVIIIa region. Asn253 carries an N-linked (GlcNAc...) asparagine glycan.

The protein belongs to the peptidase S1 family. Snake venom subfamily. N-glycosylated. The toxin exists in multiple glycoforms. As to expression, expressed by the venom gland.

It is found in the secreted. Functionally, this is the first member of the serine protease family that has strong anticoagulant activity and lacks enzymatic activity. It inhibits activities of three blood coagulation complexes: (1) prothrombinase complex (composed of blood coagulation factors Va and Xa (F5 and F10)) (IC(50)=164.1 nM), (2) intrinsic tenase complex (composed of factors VIIIa and IXa (F8 and F9)), and (3) extrinsic tenase complex (composed of tissue factor and factor VIIa (F7)). The toxin also has been observed to bind prothrombin, factor FVa, non-activated and activated forms of factors FVII (F7) (FVII and FVIIa), factor FVIIIa (F8), factors FIX and FIXa (F9) and factors FX and FXa (F10). The toxin inhibits the activity of the intrinsic tenase complex mainly by competing with FIXa (F9) for binding to FVIIIa (F8). This chain is Vaa serine proteinase homolog 1, found in Vipera ammodytes ammodytes (Western sand viper).